The chain runs to 239 residues: Leucine rich adaptor protein 1 (239 aa).

LRR repeat units follow at residues L55–L83 and L93–L114. The span at L107–S118 shows a compositional bias: low complexity. The interval L107–D140 is disordered. 3 positions are modified to phosphoserine: S118, S126, and S129.

In terms of assembly, forms a tripartite complex with CDC42BPA/CDC42BPB and MYO18A acting as an adapter connecting both. Its binding to CDC42BPA/CDC42BPB results in their activation by abolition of their negative autoregulation. Interacts with CDC42BPA and CDC42BPB. Phosphorylated.

It is found in the cytoplasm. In terms of biological role, acts as an activator of the canonical NF-kappa-B pathway and drive the production of pro-inflammatory cytokines. Promotes the antigen (Ag)-presenting and priming function of dendritic cells via the canonical NF-kappa-B pathway. In concert with MYO18A and CDC42BPA/CDC42BPB, is involved in modulating lamellar actomyosin retrograde flow that is crucial to cell protrusion and migration. Activates CDC42BPA/CDC42BPB and targets it to actomyosin through its interaction with MYO18A, leading to MYL9/MLC2 phosphorylation and MYH9/MYH10-dependent actomyosin assembly in the lamella. This chain is Leucine rich adaptor protein 1 (Lurap1), found in Rattus norvegicus (Rat).